Reading from the N-terminus, the 103-residue chain is Large ribosomal subunit protein eL14 (103 aa).

The protein belongs to the eukaryotic ribosomal protein eL14 family.

The sequence is that of Large ribosomal subunit protein eL14 from Pyrobaculum aerophilum (strain ATCC 51768 / DSM 7523 / JCM 9630 / CIP 104966 / NBRC 100827 / IM2).